Reading from the N-terminus, the 380-residue chain is Queuine tRNA-ribosyltransferase (380 aa).

Aspartate 95 (proton acceptor) is an active-site residue. Substrate is bound by residues 95-99, aspartate 149, glutamine 192, and glycine 219; that span reads DSGGF. Residues 250–256 are RNA binding; the sequence is GVGSPDA. Aspartate 269 acts as the Nucleophile in catalysis. The segment at 274 to 278 is RNA binding; important for wobble base 34 recognition; the sequence is TRIAR. 4 residues coordinate Zn(2+): cysteine 307, cysteine 309, cysteine 312, and histidine 338.

It belongs to the queuine tRNA-ribosyltransferase family. As to quaternary structure, homodimer. Within each dimer, one monomer is responsible for RNA recognition and catalysis, while the other monomer binds to the replacement base PreQ1. Requires Zn(2+) as cofactor.

The catalysed reaction is 7-aminomethyl-7-carbaguanine + guanosine(34) in tRNA = 7-aminomethyl-7-carbaguanosine(34) in tRNA + guanine. It participates in tRNA modification; tRNA-queuosine biosynthesis. Its function is as follows. Catalyzes the base-exchange of a guanine (G) residue with the queuine precursor 7-aminomethyl-7-deazaguanine (PreQ1) at position 34 (anticodon wobble position) in tRNAs with GU(N) anticodons (tRNA-Asp, -Asn, -His and -Tyr). Catalysis occurs through a double-displacement mechanism. The nucleophile active site attacks the C1' of nucleotide 34 to detach the guanine base from the RNA, forming a covalent enzyme-RNA intermediate. The proton acceptor active site deprotonates the incoming PreQ1, allowing a nucleophilic attack on the C1' of the ribose to form the product. After dissociation, two additional enzymatic reactions on the tRNA convert PreQ1 to queuine (Q), resulting in the hypermodified nucleoside queuosine (7-(((4,5-cis-dihydroxy-2-cyclopenten-1-yl)amino)methyl)-7-deazaguanosine). The polypeptide is Queuine tRNA-ribosyltransferase (Latilactobacillus sakei subsp. sakei (strain 23K) (Lactobacillus sakei subsp. sakei)).